A 340-amino-acid chain; its full sequence is N-acetyl-gamma-glutamyl-phosphate reductase (340 aa).

Cys146 is a catalytic residue.

Belongs to the NAGSA dehydrogenase family. Type 1 subfamily.

It is found in the cytoplasm. It catalyses the reaction N-acetyl-L-glutamate 5-semialdehyde + phosphate + NADP(+) = N-acetyl-L-glutamyl 5-phosphate + NADPH + H(+). The protein operates within amino-acid biosynthesis; L-arginine biosynthesis; N(2)-acetyl-L-ornithine from L-glutamate: step 3/4. In terms of biological role, catalyzes the NADPH-dependent reduction of N-acetyl-5-glutamyl phosphate to yield N-acetyl-L-glutamate 5-semialdehyde. The protein is N-acetyl-gamma-glutamyl-phosphate reductase of Streptococcus mutans serotype c (strain ATCC 700610 / UA159).